We begin with the raw amino-acid sequence, 76 residues long: ATP synthase subunit c (76 aa).

Transmembrane regions (helical) follow at residues 13-33 and 55-75; these read LSVI…GILF and FIGL…ALII.

This sequence belongs to the ATPase C chain family. In terms of assembly, F-type ATPases have 2 components, F(1) - the catalytic core - and F(0) - the membrane proton channel. F(1) has five subunits: alpha(3), beta(3), gamma(1), delta(1), epsilon(1). F(0) has three main subunits: a(1), b(2) and c(10-14). The alpha and beta chains form an alternating ring which encloses part of the gamma chain. F(1) is attached to F(0) by a central stalk formed by the gamma and epsilon chains, while a peripheral stalk is formed by the delta and b chains.

It localises to the cell membrane. F(1)F(0) ATP synthase produces ATP from ADP in the presence of a proton or sodium gradient. F-type ATPases consist of two structural domains, F(1) containing the extramembraneous catalytic core and F(0) containing the membrane proton channel, linked together by a central stalk and a peripheral stalk. During catalysis, ATP synthesis in the catalytic domain of F(1) is coupled via a rotary mechanism of the central stalk subunits to proton translocation. In terms of biological role, key component of the F(0) channel; it plays a direct role in translocation across the membrane. A homomeric c-ring of between 10-14 subunits forms the central stalk rotor element with the F(1) delta and epsilon subunits. The sequence is that of ATP synthase subunit c from Bifidobacterium longum subsp. infantis (strain ATCC 15697 / DSM 20088 / JCM 1222 / NCTC 11817 / S12).